Here is a 112-residue protein sequence, read N- to C-terminus: Putative pterin-4-alpha-carbinolamine dehydratase (112 aa).

Belongs to the pterin-4-alpha-carbinolamine dehydratase family.

The enzyme catalyses (4aS,6R)-4a-hydroxy-L-erythro-5,6,7,8-tetrahydrobiopterin = (6R)-L-erythro-6,7-dihydrobiopterin + H2O. The protein is Putative pterin-4-alpha-carbinolamine dehydratase of Hahella chejuensis (strain KCTC 2396).